A 178-amino-acid polypeptide reads, in one-letter code: ATP-dependent protease subunit HslV (178 aa).

Residue threonine 7 is part of the active site. Na(+) contacts are provided by glycine 162, cysteine 165, and threonine 168.

The protein belongs to the peptidase T1B family. HslV subfamily. A double ring-shaped homohexamer of HslV is capped on each side by a ring-shaped HslU homohexamer. The assembly of the HslU/HslV complex is dependent on binding of ATP.

It localises to the cytoplasm. The enzyme catalyses ATP-dependent cleavage of peptide bonds with broad specificity.. Its activity is regulated as follows. Allosterically activated by HslU binding. Protease subunit of a proteasome-like degradation complex believed to be a general protein degrading machinery. This Cupriavidus taiwanensis (strain DSM 17343 / BCRC 17206 / CCUG 44338 / CIP 107171 / LMG 19424 / R1) (Ralstonia taiwanensis (strain LMG 19424)) protein is ATP-dependent protease subunit HslV.